The following is a 564-amino-acid chain: Dihydroxy-acid dehydratase (564 aa).

C53 provides a ligand contact to [2Fe-2S] cluster. D85 is a Mg(2+) binding site. [2Fe-2S] cluster is bound at residue C126. Residues D127 and K128 each contribute to the Mg(2+) site. Position 128 is an N6-carboxylysine (K128). C203 lines the [2Fe-2S] cluster pocket. E454 contacts Mg(2+). The active-site Proton acceptor is S480.

It belongs to the IlvD/Edd family. As to quaternary structure, homodimer. [2Fe-2S] cluster is required as a cofactor. Mg(2+) serves as cofactor.

The catalysed reaction is (2R)-2,3-dihydroxy-3-methylbutanoate = 3-methyl-2-oxobutanoate + H2O. It catalyses the reaction (2R,3R)-2,3-dihydroxy-3-methylpentanoate = (S)-3-methyl-2-oxopentanoate + H2O. It participates in amino-acid biosynthesis; L-isoleucine biosynthesis; L-isoleucine from 2-oxobutanoate: step 3/4. The protein operates within amino-acid biosynthesis; L-valine biosynthesis; L-valine from pyruvate: step 3/4. Its function is as follows. Functions in the biosynthesis of branched-chain amino acids. Catalyzes the dehydration of (2R,3R)-2,3-dihydroxy-3-methylpentanoate (2,3-dihydroxy-3-methylvalerate) into 2-oxo-3-methylpentanoate (2-oxo-3-methylvalerate) and of (2R)-2,3-dihydroxy-3-methylbutanoate (2,3-dihydroxyisovalerate) into 2-oxo-3-methylbutanoate (2-oxoisovalerate), the penultimate precursor to L-isoleucine and L-valine, respectively. This chain is Dihydroxy-acid dehydratase, found in Leifsonia xyli subsp. xyli (strain CTCB07).